A 148-amino-acid chain; its full sequence is Nucleoside diphosphate kinase (148 aa).

K9, F57, R85, T91, R102, and N112 together coordinate ATP. At T91 the chain carries Phosphothreonine. H115 (pros-phosphohistidine intermediate) is an active-site residue. Phosphoserine is present on S122.

Belongs to the NDK family. In terms of assembly, homotetramer. Requires Mg(2+) as cofactor.

The protein localises to the cytoplasm. It catalyses the reaction a 2'-deoxyribonucleoside 5'-diphosphate + ATP = a 2'-deoxyribonucleoside 5'-triphosphate + ADP. It carries out the reaction a ribonucleoside 5'-diphosphate + ATP = a ribonucleoside 5'-triphosphate + ADP. Major role in the synthesis of nucleoside triphosphates other than ATP. The ATP gamma phosphate is transferred to the NDP beta phosphate via a ping-pong mechanism, using a phosphorylated active-site intermediate. In Oceanobacillus iheyensis (strain DSM 14371 / CIP 107618 / JCM 11309 / KCTC 3954 / HTE831), this protein is Nucleoside diphosphate kinase.